The primary structure comprises 94 residues: Cell division protein FtsB (94 aa).

Topologically, residues 1–3 are cytoplasmic; it reads MRV. A helical membrane pass occupies residues 4–21; the sequence is FALTLSLLLVWLLYTLMW. The Periplasmic portion of the chain corresponds to 22-94; it reads GKNGVMDFRA…YRIIGEESRQ (73 aa). Positions 33-76 form a coiled coil; that stretch reads QAEIEVQQQVNANLHLRNQEMFAEIDDLRQGLDAIEERARNELG.

Belongs to the FtsB family. Part of a complex composed of FtsB, FtsL and FtsQ.

Its subcellular location is the cell inner membrane. In terms of biological role, essential cell division protein. May link together the upstream cell division proteins, which are predominantly cytoplasmic, with the downstream cell division proteins, which are predominantly periplasmic. This Vibrio cholerae serotype O1 (strain ATCC 39315 / El Tor Inaba N16961) protein is Cell division protein FtsB.